Reading from the N-terminus, the 155-residue chain is Small ribosomal subunit protein uS7 (155 aa).

This sequence belongs to the universal ribosomal protein uS7 family. As to quaternary structure, part of the 30S ribosomal subunit. Contacts proteins S9 and S11.

Functionally, one of the primary rRNA binding proteins, it binds directly to 16S rRNA where it nucleates assembly of the head domain of the 30S subunit. Is located at the subunit interface close to the decoding center, probably blocks exit of the E-site tRNA. This chain is Small ribosomal subunit protein uS7, found in Xylella fastidiosa (strain M12).